A 75-amino-acid polypeptide reads, in one-letter code: MVYLKRPYFRKSRSCPLAQCPDEDIDYKNRALLSKFVSEYGRILPSRITSVSSRKQKLLARAVKRARFLALLPYC.

The protein belongs to the bacterial ribosomal protein bS18 family. As to quaternary structure, part of the 30S ribosomal subunit. Forms a tight heterodimer with protein bS6.

Binds as a heterodimer with protein bS6 to the central domain of the 16S rRNA, where it helps stabilize the platform of the 30S subunit. In Anaplasma marginale (strain St. Maries), this protein is Small ribosomal subunit protein bS18.